Here is a 395-residue protein sequence, read N- to C-terminus: Acetate kinase (395 aa).

Mg(2+) is bound at residue N8. K15 lines the ATP pocket. Position 89 (R89) interacts with substrate. Catalysis depends on D146, which acts as the Proton donor/acceptor. ATP is bound by residues 206-210, 281-283, and 329-333; these read HLGNG, DLR, and GIGEN. A Mg(2+)-binding site is contributed by E382.

It belongs to the acetokinase family. In terms of assembly, homodimer. Requires Mg(2+) as cofactor. The cofactor is Mn(2+).

The protein localises to the cytoplasm. The enzyme catalyses acetate + ATP = acetyl phosphate + ADP. Its pathway is metabolic intermediate biosynthesis; acetyl-CoA biosynthesis; acetyl-CoA from acetate: step 1/2. Induced by glucose excess, the induction may be mediated by CcpA transcriptional regulator. Catalyzes the formation of acetyl phosphate from acetate and ATP. Can also catalyze the reverse reaction. Appears to favor the formation of acetate. Involved in the secretion of excess carbohydrate. This is Acetate kinase from Bacillus subtilis (strain 168).